Consider the following 328-residue polypeptide: Phenylalanine--tRNA ligase alpha subunit (328 aa).

A Mg(2+)-binding site is contributed by glutamate 253.

It belongs to the class-II aminoacyl-tRNA synthetase family. Phe-tRNA synthetase alpha subunit type 1 subfamily. In terms of assembly, tetramer of two alpha and two beta subunits. The cofactor is Mg(2+).

It is found in the cytoplasm. The catalysed reaction is tRNA(Phe) + L-phenylalanine + ATP = L-phenylalanyl-tRNA(Phe) + AMP + diphosphate + H(+). The sequence is that of Phenylalanine--tRNA ligase alpha subunit from Coxiella burnetii (strain Dugway 5J108-111).